The primary structure comprises 344 residues: GTPase Obg (344 aa).

Residues 1-159 (MKFLDEAKVY…MWLILRLKLI (159 aa)) enclose the Obg domain. Residues 160-327 (ADAGLVGLPN…ALRAIQAQLD (168 aa)) form the OBG-type G domain. GTP-binding positions include 166 to 173 (GLPNAGKS), 191 to 195 (FTTLH), 212 to 215 (DIPG), 279 to 282 (SKAD), and 308 to 310 (SAA). Mg(2+) contacts are provided by S173 and T193.

This sequence belongs to the TRAFAC class OBG-HflX-like GTPase superfamily. OBG GTPase family. Monomer. Requires Mg(2+) as cofactor.

It localises to the cytoplasm. An essential GTPase which binds GTP, GDP and possibly (p)ppGpp with moderate affinity, with high nucleotide exchange rates and a fairly low GTP hydrolysis rate. Plays a role in control of the cell cycle, stress response, ribosome biogenesis and in those bacteria that undergo differentiation, in morphogenesis control. The chain is GTPase Obg from Methylorubrum extorquens (strain CM4 / NCIMB 13688) (Methylobacterium extorquens).